A 229-amino-acid chain; its full sequence is Large ribosomal subunit protein uL1 (229 aa).

It belongs to the universal ribosomal protein uL1 family. In terms of assembly, part of the 50S ribosomal subunit.

Binds directly to 23S rRNA. The L1 stalk is quite mobile in the ribosome, and is involved in E site tRNA release. In terms of biological role, protein L1 is also a translational repressor protein, it controls the translation of the L11 operon by binding to its mRNA. The polypeptide is Large ribosomal subunit protein uL1 (Rhodopseudomonas palustris (strain HaA2)).